Consider the following 343-residue polypeptide: Small ribosomal subunit biogenesis GTPase RsgA (343 aa).

One can recognise a CP-type G domain in the interval 116-275 (HGQLKPVAAN…LIDSPGIREF (160 aa)). GTP contacts are provided by residues 163–166 (NKAD) and 217–225 (GQSGVGKSS). Cys299, Cys304, His306, and Cys312 together coordinate Zn(2+).

This sequence belongs to the TRAFAC class YlqF/YawG GTPase family. RsgA subfamily. As to quaternary structure, monomer. Associates with 30S ribosomal subunit, binds 16S rRNA. Zn(2+) serves as cofactor.

The protein resides in the cytoplasm. Its function is as follows. One of several proteins that assist in the late maturation steps of the functional core of the 30S ribosomal subunit. Helps release RbfA from mature subunits. May play a role in the assembly of ribosomal proteins into the subunit. Circularly permuted GTPase that catalyzes slow GTP hydrolysis, GTPase activity is stimulated by the 30S ribosomal subunit. The sequence is that of Small ribosomal subunit biogenesis GTPase RsgA from Pseudomonas putida (strain ATCC 700007 / DSM 6899 / JCM 31910 / BCRC 17059 / LMG 24140 / F1).